The following is a 216-amino-acid chain: Glutathione S-transferase 1, isoform B (216 aa).

Positions 1 to 80 (MDFYYLPGSA…YLVEKYGKPC (80 aa)) constitute a GST N-terminal domain. Residues Ser9, 50 to 52 (HCV), and 64 to 66 (ESR) each bind glutathione. Positions 89-210 (DPQKRAIVNQ…RSWAEAARPF (122 aa)) constitute a GST C-terminal domain.

Belongs to the GST superfamily. Theta family. In terms of assembly, homodimer.

It carries out the reaction RX + glutathione = an S-substituted glutathione + a halide anion + H(+). Its function is as follows. Conjugation of reduced glutathione to a wide number of exogenous and endogenous hydrophobic electrophiles. This is Glutathione S-transferase 1, isoform B from Anopheles gambiae (African malaria mosquito).